A 216-amino-acid polypeptide reads, in one-letter code: Cytidylate kinase (216 aa).

9–17 serves as a coordination point for ATP; it reads GPAASGKGT.

This sequence belongs to the cytidylate kinase family. Type 1 subfamily.

The protein localises to the cytoplasm. It catalyses the reaction CMP + ATP = CDP + ADP. It carries out the reaction dCMP + ATP = dCDP + ADP. The polypeptide is Cytidylate kinase (Caulobacter sp. (strain K31)).